The chain runs to 175 residues: MDIAIHHPWIRRPFFPFHSPSRLFDQFFGEHLLESDLFPASTSLSPFYLRPPSFLRAPSWIDTGLSEVRLEKDRFSVNLDVKHFSPEELKVKVLGDVIEVHGKHEERQDEHGFISREFHRKYRIPADVDPLTITSSLSSDGVLTMNGPRKQASGPERTIPITREEKPAVTAAPKK.

Met1 is subject to N-acetylmethionine. Ser19 is modified (phosphoserine). An O-linked (GlcNAc) serine glycan is attached at Ser41. Phosphoserine is present on residues Ser45 and Ser59. Residues 56 to 164 (RAPSWIDTGL…PERTIPITRE (109 aa)) enclose the sHSP domain. Position 83 (His83) interacts with Zn(2+). Lys92 is modified (N6-acetyllysine). The Zn(2+) site is built by His104, Glu106, His111, and His119. A disordered region spans residues 139 to 175 (SDGVLTMNGPRKQASGPERTIPITREEKPAVTAAPKK). Position 166 is an N6-acetyllysine (Lys166). The O-linked (GlcNAc) threonine glycan is linked to Thr170.

Belongs to the small heat shock protein (HSP20) family. In terms of assembly, heteromer composed of three CRYAA and one CRYAB subunits. Aggregates with homologous proteins, including the small heat shock protein HSPB1, to form large heteromeric complexes. Inter-subunit bridging via zinc ions enhances stability, which is crucial as there is no protein turn over in the lens. Interacts with HSPBAP1 and TTN/titin. Interacts with TMEM109; in the cellular response to DNA damage. Interacts with DES; binds rapidly during early stages of DES filament assembly and a reduced binding seen in the later stages. Interacts with ATP6V1A and with MTOR, forming a ternary complex.

Its subcellular location is the cytoplasm. It is found in the nucleus. The protein localises to the secreted. The protein resides in the lysosome. May contribute to the transparency and refractive index of the lens. Has chaperone-like activity, preventing aggregation of various proteins under a wide range of stress conditions. In lens epithelial cells, stabilizes the ATP6V1A protein, preventing its degradation by the proteasome. The polypeptide is Alpha-crystallin B chain (CRYAB) (Ovis aries (Sheep)).